We begin with the raw amino-acid sequence, 522 residues long: Glutamate--cysteine ligase (522 aa).

It belongs to the glutamate--cysteine ligase type 1 family. Type 1 subfamily.

The enzyme catalyses L-cysteine + L-glutamate + ATP = gamma-L-glutamyl-L-cysteine + ADP + phosphate + H(+). The protein operates within sulfur metabolism; glutathione biosynthesis; glutathione from L-cysteine and L-glutamate: step 1/2. The chain is Glutamate--cysteine ligase from Vibrio campbellii (strain ATCC BAA-1116).